A 128-amino-acid chain; its full sequence is Sulfurtransferase TusD (128 aa).

Residue C78 is the Cysteine persulfide intermediate of the active site.

Belongs to the DsrE/TusD family. As to quaternary structure, heterohexamer, formed by a dimer of trimers. The hexameric TusBCD complex contains 2 copies each of TusB, TusC and TusD. The TusBCD complex interacts with TusE.

It is found in the cytoplasm. Functionally, part of a sulfur-relay system required for 2-thiolation of 5-methylaminomethyl-2-thiouridine (mnm(5)s(2)U) at tRNA wobble positions. Accepts sulfur from TusA and transfers it in turn to TusE. In Escherichia coli O45:K1 (strain S88 / ExPEC), this protein is Sulfurtransferase TusD.